Consider the following 134-residue polypeptide: Small ribosomal subunit protein eS24A (134 aa).

The residue at position 2 (serine 2) is an N-acetylserine. The interval 100-134 (IQKVARQQRKQRKNRGKKVFGTGKRLAKRKSKQQD) is disordered. 2 stretches are compositionally biased toward basic residues: residues 105 to 117 (RQQR…RGKK) and 124 to 134 (RLAKRKSKQQD).

It belongs to the eukaryotic ribosomal protein eS24 family. Component of the small ribosomal subunit (SSU). Mature yeast ribosomes consist of a small (40S) and a large (60S) subunit. The 40S small subunit contains 1 molecule of ribosomal RNA (18S rRNA) and at least 33 different proteins. The large 60S subunit contains 3 rRNA molecules (25S, 5.8S and 5S rRNA) and at least 46 different proteins.

It is found in the cytoplasm. Component of the ribosome, a large ribonucleoprotein complex responsible for the synthesis of proteins in the cell. The small ribosomal subunit (SSU) binds messenger RNAs (mRNAs) and translates the encoded message by selecting cognate aminoacyl-transfer RNA (tRNA) molecules. The large subunit (LSU) contains the ribosomal catalytic site termed the peptidyl transferase center (PTC), which catalyzes the formation of peptide bonds, thereby polymerizing the amino acids delivered by tRNAs into a polypeptide chain. The nascent polypeptides leave the ribosome through a tunnel in the LSU and interact with protein factors that function in enzymatic processing, targeting, and the membrane insertion of nascent chains at the exit of the ribosomal tunnel. In Schizosaccharomyces pombe (strain 972 / ATCC 24843) (Fission yeast), this protein is Small ribosomal subunit protein eS24A (rps2401).